The chain runs to 329 residues: Phenylalanine--tRNA ligase alpha subunit (329 aa).

Glu253 lines the Mg(2+) pocket.

The protein belongs to the class-II aminoacyl-tRNA synthetase family. Phe-tRNA synthetase alpha subunit type 1 subfamily. Tetramer of two alpha and two beta subunits. Mg(2+) is required as a cofactor.

The protein resides in the cytoplasm. It catalyses the reaction tRNA(Phe) + L-phenylalanine + ATP = L-phenylalanyl-tRNA(Phe) + AMP + diphosphate + H(+). This is Phenylalanine--tRNA ligase alpha subunit from Teredinibacter turnerae (strain ATCC 39867 / T7901).